Consider the following 334-residue polypeptide: MNKRISLTRYLVEQQRMEGHIPAQLRLLLEVVARACKRISLTVNKGALGGVLGSAETENIQGEMQKKLDIIANEVLIEANEWGGHLAAMASEEMDGIYIVPNRYPQGEYLLMFDPLDGSSNIDVNVSIGTIFSVLVKPDGQGVLEQDFLQPGNQQVAAGYCVFGPQTTLVLTVGDGVAMFTLDREQGSFILTAENMRVPVDTQEFAVNMSNQRHWDTPVKRYIDECLQGKDGPRGKDFNMRWVGSMVADVHRILTRGGVFLYPWDKREPEKPGKLRLMYEANPMAWLIEQAGGAASTGKQRILDLQPGKLHERVSVFLGSKNEVERIARYHGEA.

Glu92, Asp114, Leu116, and Asp117 together coordinate Mg(2+). Residues 117–120 (DGSS), Asn208, and Lys274 contribute to the substrate site. Glu280 lines the Mg(2+) pocket.

It belongs to the FBPase class 1 family. In terms of assembly, homotetramer. The cofactor is Mg(2+).

Its subcellular location is the cytoplasm. The catalysed reaction is beta-D-fructose 1,6-bisphosphate + H2O = beta-D-fructose 6-phosphate + phosphate. The protein operates within carbohydrate biosynthesis; gluconeogenesis. This is Fructose-1,6-bisphosphatase class 1 2 from Albidiferax ferrireducens (strain ATCC BAA-621 / DSM 15236 / T118) (Rhodoferax ferrireducens).